The primary structure comprises 504 residues: Patatin-like phospholipase domain-containing protein 2 (504 aa).

At 1–8 (MFPREKTW) the chain is on the cytoplasmic side. Residues 9-29 (NISFAGCGFLGVYYVGVASCL) traverse the membrane as a helical segment. The PNPLA domain maps to 10-179 (ISFAGCGFLG…SDNLPLYELK (170 aa)). Residues 14 to 19 (GCGFLG) carry the GXGXXG motif. Over 30-42 (REHAPFLVANATH) the chain is Extracellular. Asn-39 is a glycosylation site (N-linked (GlcNAc...) asparagine). A helical membrane pass occupies residues 43 to 63 (IYGASAGALTATALVTGVCLG). The GXSXG signature appears at 45–49 (GASAG). Ser-47 acts as the Nucleophile in catalysis. At 64–137 (EAGAKFIEVS…IISHFNSKDE (74 aa)) the chain is on the cytoplasmic side. Lys-92 participates in a covalent cross-link: Glycyl lysine isopeptide (Lys-Gly) (interchain with G-Cter in ubiquitin). A helical membrane pass occupies residues 138–158 (LIQANVCSGFIPVYCGLIPPS). Residues 159-329 (LQGVRYVDGG…TTLSNMLPVR (171 aa)) are Extracellular-facing. Asp-166 acts as the Proton acceptor in catalysis. Residues 166–168 (DGG) carry the DGA/G motif. Residues 330–350 (LATAMMVPYTLPLESALSFTI) form a helical membrane-spanning segment. The Cytoplasmic portion of the chain corresponds to 351–504 (RLLEWLPDVP…ARPVIGALGL (154 aa)). Ser-372 bears the Phosphoserine; in vitro mark. Ser-404 is modified (phosphoserine; by PKA and FAM20C). Position 428 is a phosphoserine (Ser-428). The interval 463–492 (APADPAPAPADPASPQHQLAGPAPLLSTPA) is disordered.

Interacts with ABHD5; this association stimulates PNPLA2 triglyceride hydrolase activity. Interacts with SERPINF1; this interaction stimulates the phospholipase A2 activity of PNPLA2. Despite a colocalization in lipid droplets, it probably does not interact with PLIN. Interacts with PLIN5; prevents interaction with ABHD5. Interacts with FAF2. Phosphorylation at Ser-404 by PKA is increased during fasting and moderate intensity exercise, and moderately increases lipolytic activity. Phosphorylation at Ser-404 is increased upon beta-adrenergic stimulation. Post-translationally, ubiquitinated by PEX2 in response to reactive oxygen species (ROS), leading to its degradation. Ubiquitination is stimulated by LDAH. Highest expression in adipose tissue. Also detected in heart, skeletal muscle, and portions of the gastrointestinal tract. Detected in normal retina and retinoblastoma cells. Detected in retinal pigment epithelium and, at lower intensity, in the inner segments of photoreceptors and in the ganglion cell layer of the neural retina (at protein level).

The protein localises to the lipid droplet. It is found in the cell membrane. It localises to the cytoplasm. The catalysed reaction is a triacylglycerol + H2O = a diacylglycerol + a fatty acid + H(+). It catalyses the reaction a triacylglycerol + H2O = a 1,2-diacylglycerol + a fatty acid + H(+). It carries out the reaction a triacylglycerol + H2O = a 1,3-diacylglycerol + a fatty acid + H(+). The enzyme catalyses a triacyl-sn-glycerol + H2O = a 1,3-diacyl-sn-glycerol + a fatty acid + H(+). The catalysed reaction is a triacyl-sn-glycerol + H2O = a 2,3-diacyl-sn-glycerol + a fatty acid + H(+). It catalyses the reaction a 1-acylglycerol + a 1,3-diacylglycerol = a triacylglycerol + glycerol. It carries out the reaction a 1-acylglycerol + a 1,2-diacylglycerol = a triacylglycerol + glycerol. The enzyme catalyses 2 a 1-acylglycerol = a 1,2-diacylglycerol + glycerol. The catalysed reaction is a triacylglycerol + all-trans-retinol = an all-trans-retinyl ester + a diacylglycerol. It catalyses the reaction 1,2-di-(9Z-octadecenoyl)-glycerol + (9Z)-octadecenoate + H(+) = 1,2,3-tri-(9Z-octadecenoyl)-glycerol + H2O. It carries out the reaction 1,2,3-tri-(9Z-octadecenoyl)-glycerol + H2O = 1,3-di-(9Z-octadecenoyl)-glycerol + (9Z)-octadecenoate + H(+). The enzyme catalyses 1-(9Z-octadecenoyl)-glycerol + 1,3-di-(9Z-octadecenoyl)-glycerol = 1,2,3-tri-(9Z-octadecenoyl)-glycerol + glycerol. The catalysed reaction is 1-(9Z-octadecenoyl)-glycerol + 1,2-di-(9Z-octadecenoyl)-glycerol = 1,2,3-tri-(9Z-octadecenoyl)-glycerol + glycerol. It catalyses the reaction 2 1-(9Z-octadecenoyl)-glycerol = 1,2-di-(9Z-octadecenoyl)-glycerol + glycerol. It carries out the reaction 1,2,3-tri-(9Z-octadecenoyl)-glycerol + all-trans-retinol = all-trans-retinyl 9Z-octadecenoate + di-(9Z)-octadecenoylglycerol. The enzyme catalyses 1,2,3-tri-(9Z)-hexadecenoylglycerol + H2O = 1,3-di-(9Z)-hexadecenoylglycerol + (9Z)-hexadecenoate + H(+). The catalysed reaction is 1,2,3-tri-(9Z,12Z)-octadecadienoylglycerol + H2O = 1,3-di-(9Z,12Z)-octadecadienoylglycerol + (9Z,12Z)-octadecadienoate + H(+). It catalyses the reaction 1,2,3-tri-(9Z,12Z,15Z)-octadecatrienoylglycerol + H2O = 1,3-di-(9Z,12Z,15Z)-octadecatrienoylglycerol + (9Z,12Z,15Z)-octadecatrienoate + H(+). It carries out the reaction 1,3-di-(9Z)-octadecenoyl-2-hexadecanoylglycerol + H2O = 1,3-di-(9Z-octadecenoyl)-glycerol + hexadecanoate + H(+). The enzyme catalyses 1,2-di-(9Z)-octadecenoyl-3-hexadecanoyl-sn-glycerol + H2O = 1-(9Z)-octadecenoyl-3-hexadecanoyl-sn-glycerol + (9Z)-octadecenoate + H(+). The catalysed reaction is 1-hexadecanoyl-2,3-di-(9Z)-octadecenoyl-sn-glycerol + H2O = 1-hexadecanoyl-3-(9Z)-octadecenoyl-sn-glycerol + (9Z)-octadecenoate + H(+). It catalyses the reaction 1,2,3-tri-(9Z-octadecenoyl)-glycerol + H2O = 2,3-di-(9Z)-octadecenoyl-sn-glycerol + (9Z)-octadecenoate + H(+). It carries out the reaction 1,2,3-tri-(9Z)-hexadecenoylglycerol + H2O = 2,3-di-(9Z)-hexadecenoyl-sn-glycerol + (9Z)-hexadecenoate + H(+). The enzyme catalyses 1,2,3-tri-(9Z,12Z)-octadecadienoylglycerol + H2O = 2,3-di-(9Z,12Z)-octadecadienoyl-sn-glycerol + (9Z,12Z)-octadecadienoate + H(+). The catalysed reaction is 1,2,3-tri-(9Z,12Z,15Z)-octadecatrienoylglycerol + H2O = 2,3-di-(9Z,12Z,15Z)-octadecatrienoyl-sn-glycerol + (9Z,12Z,15Z)-octadecatrienoate + H(+). It catalyses the reaction 1,3-di-(9Z)-octadecenoyl-2-hexadecanoylglycerol + H2O = 2-hexadecanoyl-3-(9Z)-octadecenoyl-sn-glycerol + (9Z)-octadecenoate + H(+). It carries out the reaction 1-hexadecanoyl-2,3-di-(9Z)-octadecenoyl-sn-glycerol + H2O = 2,3-di-(9Z)-octadecenoyl-sn-glycerol + hexadecanoate + H(+). The enzyme catalyses 1,2-di-(9Z)-octadecenoyl-3-hexadecanoyl-sn-glycerol + H2O = 2-(9Z-octadecenoyl)-3-hexadecanoyl-sn-glycerol + (9Z)-octadecenoate + H(+). The catalysed reaction is a 1,2-diacyl-sn-glycero-3-phosphocholine + H2O = a 1-acyl-sn-glycero-3-phosphocholine + a fatty acid + H(+). It catalyses the reaction 1,2,3-tri-(9Z-octadecenoyl)-glycerol + 9-hydroxy-octadecanoate = 9-(9Z-octadecenoyloxy)-octadecanoate + 2,3-di-(9Z)-octadecenoyl-sn-glycerol. It carries out the reaction 1-hexadecanoyl-2,3-di-(9Z)-octadecenoyl-sn-glycerol + 9-hydroxy-octadecanoate = 9-hexadecanoyloxy-octadecanoate + 2,3-di-(9Z)-octadecenoyl-sn-glycerol. The enzyme catalyses 1,2,3-tri-(10Z)-heptadecenoylglycerol + 9-hydroxy-octadecanoate = 2,3-di-(10Z-heptadecenoyl)-sn-glycerol + 9-(10Z-heptadecenoyloxy)-octadecanoate. The catalysed reaction is 1,2,3-tri-(9Z,12Z)-octadecadienoylglycerol + 9-hydroxy-octadecanoate = 2,3-di-(9Z,12Z)-octadecadienoyl-sn-glycerol + 9-(9Z,12Z-octadecadienoyloxy)-octadecanoate. It catalyses the reaction 1,2,3-tri-(9Z)-hexadecenoylglycerol + 9-hydroxy-octadecanoate = 2,3-di-(9Z)-hexadecenoyl-sn-glycerol + 9-(9Z-hexadecenoyloxy)-octadecanoate. It carries out the reaction 9-hydroxy-octadecanoate + 1,2-di-(9Z-octadecenoyl)-sn-glycerol = 9-(9Z-octadecenoyloxy)-octadecanoate + 2-(9Z-octadecenoyl)-glycerol. The enzyme catalyses 1-hexadecanoyl-2,3-di-(9Z)-octadecenoyl-sn-glycerol + 9-hydroxy-octadecanoate = 1-hexadecanoyl-3-(9Z)-octadecenoyl-sn-glycerol + 9-(9Z-octadecenoyloxy)-octadecanoate. Its pathway is glycerolipid metabolism; triacylglycerol degradation. With respect to regulation, the triglyceride lipase activity is inhibited by BEL ((E)-6-(bromomethylene)-3-(1-naphthalenyl)-2H-tetrahydropyran-2-one), a suicide substrate inhibitor. No differences in the acylglycerol transacylase was detected in the presence or absence of ATP. Functionally, catalyzes the initial step in triglyceride hydrolysis in adipocyte and non-adipocyte lipid droplets. Exhibits a strong preference for the hydrolysis of long-chain fatty acid esters at the sn-2 position of the glycerol backbone and acts coordinately with LIPE/HLS and DGAT2 within the lipolytic cascade. Also possesses acylglycerol transacylase and phospholipase A2 activities. Transfers fatty acid from triglyceride to retinol, hydrolyzes retinylesters, and generates 1,3-diacylglycerol from triglycerides. Regulates adiposome size and may be involved in the degradation of adiposomes. Catalyzes the formation of an ester bond between hydroxy fatty acids and fatty acids derived from triglycerides or diglycerides to generate fatty acid esters of hydroxy fatty acids (FAHFAs) in adipocytes. Acts antagonistically with LDAH in regulation of cellular lipid stores. Inhibits LDAH-stimulated lipid droplet fusion. May play an important role in energy homeostasis. May play a role in the response of the organism to starvation, enhancing hydrolysis of triglycerides and providing free fatty acids to other tissues to be oxidized in situations of energy depletion. This Homo sapiens (Human) protein is Patatin-like phospholipase domain-containing protein 2.